The primary structure comprises 425 residues: Glutamyl-tRNA reductase (425 aa).

Substrate-binding positions include 49 to 52 (TCNR), serine 109, 114 to 116 (EGQ), and glutamine 120. Cysteine 50 (nucleophile) is an active-site residue. 189–194 (GAGETG) contacts NADP(+).

This sequence belongs to the glutamyl-tRNA reductase family. In terms of assembly, homodimer.

It carries out the reaction (S)-4-amino-5-oxopentanoate + tRNA(Glu) + NADP(+) = L-glutamyl-tRNA(Glu) + NADPH + H(+). The protein operates within porphyrin-containing compound metabolism; protoporphyrin-IX biosynthesis; 5-aminolevulinate from L-glutamyl-tRNA(Glu): step 1/2. It functions in the pathway porphyrin-containing compound metabolism; chlorophyll biosynthesis. Its function is as follows. Catalyzes the NADPH-dependent reduction of glutamyl-tRNA(Glu) to glutamate 1-semialdehyde (GSA). In Chlorobium phaeobacteroides (strain DSM 266 / SMG 266 / 2430), this protein is Glutamyl-tRNA reductase.